The sequence spans 226 residues: ATP synthase F(0) complex subunit a (226 aa).

5 helical membrane-spanning segments follow: residues Phe9–Leu29, Trp68–Leu88, Gln97–Phe117, Ile138–Val158, and Ile184–Phe204.

The protein belongs to the ATPase A chain family. Component of the ATP synthase complex composed at least of ATP5F1A/subunit alpha, ATP5F1B/subunit beta, ATP5MC1/subunit c (homooctomer), MT-ATP6/subunit a, MT-ATP8/subunit 8, ATP5ME/subunit e, ATP5MF/subunit f, ATP5MG/subunit g, ATP5MK/subunit k, ATP5MJ/subunit j, ATP5F1C/subunit gamma, ATP5F1D/subunit delta, ATP5F1E/subunit epsilon, ATP5PF/subunit F6, ATP5PB/subunit b, ATP5PD/subunit d, ATP5PO/subunit OSCP. ATP synthase complex consists of a soluble F(1) head domain (subunits alpha(3) and beta(3)) - the catalytic core - and a membrane F(0) domain - the membrane proton channel (subunits c, a, 8, e, f, g, k and j). These two domains are linked by a central stalk (subunits gamma, delta, and epsilon) rotating inside the F1 region and a stationary peripheral stalk (subunits F6, b, d, and OSCP). Interacts with DNAJC30; interaction is direct.

It localises to the mitochondrion inner membrane. The catalysed reaction is H(+)(in) = H(+)(out). Subunit a, of the mitochondrial membrane ATP synthase complex (F(1)F(0) ATP synthase or Complex V) that produces ATP from ADP in the presence of a proton gradient across the membrane which is generated by electron transport complexes of the respiratory chain. ATP synthase complex consist of a soluble F(1) head domain - the catalytic core - and a membrane F(1) domain - the membrane proton channel. These two domains are linked by a central stalk rotating inside the F(1) region and a stationary peripheral stalk. During catalysis, ATP synthesis in the catalytic domain of F(1) is coupled via a rotary mechanism of the central stalk subunits to proton translocation. With the subunit c (ATP5MC1), forms the proton-conducting channel in the F(0) domain, that contains two crucial half-channels (inlet and outlet) that facilitate proton movement from the mitochondrial intermembrane space (IMS) into the matrix. Protons are taken up via the inlet half-channel and released through the outlet half-channel, following a Grotthuss mechanism. This Capra hircus (Goat) protein is ATP synthase F(0) complex subunit a.